A 174-amino-acid chain; its full sequence is ATP-dependent protease subunit HslV (174 aa).

Residue Thr-2 is part of the active site. 3 residues coordinate Na(+): Gly-157, Cys-160, and Thr-163.

Belongs to the peptidase T1B family. HslV subfamily. A double ring-shaped homohexamer of HslV is capped on each side by a ring-shaped HslU homohexamer. The assembly of the HslU/HslV complex is dependent on binding of ATP.

The protein resides in the cytoplasm. The enzyme catalyses ATP-dependent cleavage of peptide bonds with broad specificity.. With respect to regulation, allosterically activated by HslU binding. Functionally, protease subunit of a proteasome-like degradation complex believed to be a general protein degrading machinery. The polypeptide is ATP-dependent protease subunit HslV (Shewanella oneidensis (strain ATCC 700550 / JCM 31522 / CIP 106686 / LMG 19005 / NCIMB 14063 / MR-1)).